Here is a 459-residue protein sequence, read N- to C-terminus: Tubulin gamma chain (459 aa).

Residue 142–148 (AGGTGSG) coordinates GTP. The tract at residues 440 to 459 (ADYLTKETAPTDEAEDKRAG) is disordered.

This sequence belongs to the tubulin family.

It is found in the cytoplasm. It localises to the cytoskeleton. Its subcellular location is the microtubule organizing center. The protein resides in the spindle pole body. Functionally, tubulin is the major constituent of microtubules. The gamma chain is found at microtubule organizing centers (MTOC) such as the spindle poles or the centrosome, suggesting that it is involved in the minus-end nucleation of microtubule assembly. This is Tubulin gamma chain (TUB4) from Cochliobolus heterostrophus (strain C5 / ATCC 48332 / race O) (Southern corn leaf blight fungus).